The chain runs to 1559 residues: MTADKDKDKDKEKDRDRDRDRERDKRDKARESENARPRRSCTLEGGAKNYAESDHSEDEDNDNGATTEESARKSRKKPPKKKSRYERTDTGEITSYITEDDVVYRPGDCVYIESRRPNTPYFICSIQDFKLVHNSQACCRSPAPALCDPPACSLPVASQPPQHLSEAGRGPVGSKRDHLLMNVKWYYRQSEVPDSVYQHLVQDRHNENDSGRELVITDPVIKNRELFISDYVDTYHAAALRGKCNISHFSDIFAAREFKARVDSFFYILGYNPETRRLNSTQGEIRVGPSHQAKLPDLQPFPSPDGDTVTQHEELVWMPGVSDCDLLMYLRAARSMAAFAGMCDGGSTEDGCVAASRDDTTLNALNTLHESSYDAGKALQRLVKKPVPKLIEKCWTEDEVKRFVKGLRQYGKNFFRIRKELLPNKETGELITFYYYWKKTPEAASSRAHRRHRRQAVFRRIKTRTASTPVNTPSRPPSSEFLDLSSASEDDFDSEDSEQELKGYACRHCFTTTSKDWHHGGRENILLCTDCRIHFKKYGELPPIEKPVDPPPFMFKPVKEEDDGLSGKHSMRTRRSRGSMSTLRSGRKKQPASPDGRASPVNEDVRSSGRNSPSAASTSSNDSKAEAVKKSAKKVKEEAASPLKNTKRQREKVASDTEDTDRATSKKTKTQEISRPNSPSEGEGESSDSRSVNDEGSSDPKDIDQDNRSTSPSIPSPQDNESDSDSSAQQQMLQTQPPALQAPSGAASAPSTAPPGTTQLPTPGPTPSATTVPPQGSPATSQPPNQTQSTVAPAAHTLIQQTPTLHPPRLPSPHPPLQPMTAPPSQNSAQPHPQPSLHGQGPPGPHSLQTGPLLQHPGPPQPFGLTPQSSQGQGPLGPSPAAAHPHSTIQLPASQSALQPQQPPREQPLPPAPLAMPHIKPPPTTPIPQLPAPQAHKHPPHLSGPSPFSMNANLPPPPALKPLSSLSTHHPPSAHPPPLQLMPQSQPLPSSPAQPPGLTQSQSLPPPAASHPTTGGLHQVPSQSPFPQHPFVPGGPPPITPPSCPPTSTPPAGPSSSSQPPCSAAVSSGGNVPGAPSCPLPAVQIKEEALDEAEEPESPPPPPRSPSPEPTVVDTPSHASQSARFYKHLDRGYNSCARTDLYFMPLAGSKLAKKREEAIEKAKREAEQKAREEREREKEKEKEREREREREREAERAAQKASSSAHEGRLSDPQLSGPGHMRPSFEPPPTTIAAVPPYIGPDTPALRTLSEYARPHVMSPTNRNHPFYMPLNPTDPLLAYHMPGLYNVDPTIRERELREREIREREIRERELRERMKPGFEVKPPELDPLHPATNPMEHFARHSALTIPPAAGPHPFASFHPGLNPLERERLALAGPQLRPEMSYPDRLAAERIHAERMASLTSDPLARLQMFNVTPHHHQHSHIHSHLHLHQQDPLHQGSAGPVHPLVDPLTAGPHLARFPYPPGTLPNPLLGQPPHEHEMLRHPVFGTPYPRDLPGAIPPPMSAAHQLQAMHAQSAELQRLAMEQQWLHGHPHMHGGHLPSQEDYYSRLKKEGDKQL.

Positions 1–36 are enriched in basic and acidic residues; sequence MTADKDKDKDKEKDRDRDRDRERDKRDKARESENAR. The interval 1-89 is disordered; it reads MTADKDKDKD…KKKSRYERTD (89 aa). Phosphoserine is present on residues Ser-53 and Ser-56. The segment covering 73 to 84 has biased composition (basic residues); sequence KSRKKPPKKKSR. Residues 102-282 form the BAH domain; the sequence is VVYRPGDCVY…PETRRLNSTQ (181 aa). A Phosphothreonine modification is found at Thr-119. 2 positions are modified to phosphoserine: Ser-141 and Ser-303. The 104-residue stretch at 283 to 386 folds into the ELM2 domain; it reads GEIRVGPSHQ…KALQRLVKKP (104 aa). The SANT domain maps to 390-442; it reads LIEKCWTEDEVKRFVKGLRQYGKNFFRIRKELLPNKETGELITFYYYWKKTPE. The disordered stretch occupies residues 463 to 494; that stretch reads TRTASTPVNTPSRPPSSEFLDLSSASEDDFDS. Residues 464-473 show a composition bias toward polar residues; sequence RTASTPVNTP. The span at 478–487 shows a compositional bias: low complexity; the sequence is SSEFLDLSSA. The GATA-type zinc-finger motif lies at 507–532; sequence RHCFTTTSKDWHHGGRENILLCTDCR. Residues 541 to 1125 are disordered; it reads LPPIEKPVDP…PSHASQSARF (585 aa). Lys-559 participates in a covalent cross-link: Glycyl lysine isopeptide (Lys-Gly) (interchain with G-Cter in SUMO2). Residues Ser-593, Ser-599, and Ser-612 each carry the phosphoserine modification. Positions 608–622 are enriched in low complexity; sequence SGRNSPSAASTSSND. Positions 623 to 639 are enriched in basic and acidic residues; it reads SKAEAVKKSAKKVKEEA. Lys-636 participates in a covalent cross-link: Glycyl lysine isopeptide (Lys-Gly) (interchain with G-Cter in SUMO2). Ser-641, Ser-655, Ser-674, and Ser-678 each carry phosphoserine. The segment covering 651-672 has biased composition (basic and acidic residues); it reads EKVASDTEDTDRATSKKTKTQE. Over residues 687 to 707 the composition is skewed to basic and acidic residues; sequence SDSRSVNDEGSSDPKDIDQDN. The span at 708–735 shows a compositional bias: polar residues; it reads RSTSPSIPSPQDNESDSDSSAQQQMLQT. Low complexity predominate over residues 736 to 761; it reads QPPALQAPSGAASAPSTAPPGTTQLP. Over residues 768 to 791 the composition is skewed to polar residues; that stretch reads SATTVPPQGSPATSQPPNQTQSTV. Over residues 805–822 the composition is skewed to pro residues; the sequence is LHPPRLPSPHPPLQPMTA. The segment covering 890 to 900 has biased composition (low complexity); sequence QLPASQSALQP. A compositionally biased stretch (pro residues) spans 901–931; the sequence is QQPPREQPLPPAPLAMPHIKPPPTTPIPQLP. The span at 961–971 shows a compositional bias: low complexity; sequence KPLSSLSTHHP. A compositionally biased stretch (pro residues) spans 1027 to 1053; it reads PQHPFVPGGPPPITPPSCPPTSTPPAG. The span at 1054–1068 shows a compositional bias: low complexity; it reads PSSSSQPPCSAAVSS. Residues Ser-1098, Ser-1105, and Ser-1107 each carry the phosphoserine modification. Positions 1098-1109 are enriched in pro residues; the sequence is SPPPPPRSPSPE. Thr-1111 bears the Phosphothreonine mark. Residues 1148–1205 adopt a coiled-coil conformation; sequence GSKLAKKREEAIEKAKREAEQKAREEREREKEKEKEREREREREREAERAAQKASSSA. Lys-1150 bears the N6-acetyllysine mark. Positions 1154–1198 are enriched in basic and acidic residues; that stretch reads KREEAIEKAKREAEQKAREEREREKEKEKEREREREREREAERAA. The segment at 1154–1239 is disordered; the sequence is KREEAIEKAK…TTIAAVPPYI (86 aa). Tyr-1252 is subject to Phosphotyrosine. Ser-1259 bears the Phosphoserine mark.

As to quaternary structure, interacts with HDAC1 and ATN1. Interaction with ATN1 is improved when the poly-Gln region of ATN1 is extended. In terms of tissue distribution, widely expressed.

It is found in the nucleus. The protein localises to the PML body. In terms of biological role, plays a role as a transcriptional repressor during development. May play a role in the control of cell survival. Interacts with FAT1. In Rattus norvegicus (Rat), this protein is Arginine-glutamic acid dipeptide repeats protein (Rere).